Reading from the N-terminus, the 342-residue chain is Growth hormone-regulated TBC protein 1 (342 aa).

The Rab-GAP TBC domain maps to 72–263 (GIPNEHRSHV…RIWDCLFFEG (192 aa)).

In terms of biological role, may act as a GTPase-activating protein for Rab family protein(s). This is Growth hormone-regulated TBC protein 1 (grtp1) from Xenopus laevis (African clawed frog).